A 312-amino-acid polypeptide reads, in one-letter code: Ribosomal RNA small subunit methyltransferase H (312 aa).

Residues 34–36 (AGH), Asp54, Phe81, Asp102, and Gln109 contribute to the S-adenosyl-L-methionine site.

This sequence belongs to the methyltransferase superfamily. RsmH family.

The protein resides in the cytoplasm. It carries out the reaction cytidine(1402) in 16S rRNA + S-adenosyl-L-methionine = N(4)-methylcytidine(1402) in 16S rRNA + S-adenosyl-L-homocysteine + H(+). Functionally, specifically methylates the N4 position of cytidine in position 1402 (C1402) of 16S rRNA. This Geobacter sp. (strain M21) protein is Ribosomal RNA small subunit methyltransferase H.